Consider the following 554-residue polypeptide: Undecaprenyl phosphate-alpha-4-amino-4-deoxy-L-arabinose arabinosyl transferase (554 aa).

Helical transmembrane passes span 4 to 24, 87 to 107, 115 to 135, 178 to 198, 206 to 226, 262 to 282, 293 to 313, 315 to 335, 351 to 371, 384 to 404, and 414 to 434; these read LKDS…LLPV, FGSI…ATLL, VLAT…TYAV, FMTK…PIVI, LVVF…PWAL, YLPI…GALF, ELFF…VAKG, LPTY…AYAT, VINL…GLGL, QKVW…FITL, and AAAC…QQVV.

The protein belongs to the glycosyltransferase 83 family.

Its subcellular location is the cell inner membrane. The enzyme catalyses 4-amino-4-deoxy-alpha-L-arabinopyranosyl di-trans,octa-cis-undecaprenyl phosphate + lipid IVA = lipid IIA + di-trans,octa-cis-undecaprenyl phosphate.. It functions in the pathway lipopolysaccharide metabolism; 4-amino-4-deoxy-beta-L-arabinose-lipid A biosynthesis. Functionally, catalyzes the transfer of the L-Ara4N moiety of the glycolipid undecaprenyl phosphate-alpha-L-Ara4N to lipid A. The modified arabinose is attached to lipid A and is required for resistance to polymyxin and cationic antimicrobial peptides. In Yersinia pseudotuberculosis serotype O:1b (strain IP 31758), this protein is Undecaprenyl phosphate-alpha-4-amino-4-deoxy-L-arabinose arabinosyl transferase.